We begin with the raw amino-acid sequence, 344 residues long: Palmitoyltransferase ZDHHC4 (344 aa).

The Lumenal segment spans residues 1–2; the sequence is MD. The helical transmembrane segment at 3–23 threads the bilayer; that stretch reads FLVLFLFYLASVLMGLVLICV. Residues 24–67 are Cytoplasmic-facing; that stretch reads CSKTHSLKGLARGGAQIFSCIIPECLQRAVHGLLHYLFHTRNHT. A helical transmembrane segment spans residues 68–88; sequence FIVLHLVLQGMVYTEYTWEVF. The Lumenal portion of the chain corresponds to 89-99; it reads GYCQELELSLH. Residues 100–120 form a helical membrane-spanning segment; sequence YLLLPYLLLGVNLFFFTLTCG. The Cytoplasmic segment spans residues 121-192; sequence TNPGIITKAN…NNCIGAWNIR (72 aa). One can recognise a DHHC domain in the interval 149–199; the sequence is VRCSTCDLRKPARSKHCSVCNWCVHRFDHHCVWVNNCIGAWNIRYFLIYVL. Cysteine 179 serves as the catalytic S-palmitoyl cysteine intermediate. Residues 193 to 213 traverse the membrane as a helical segment; it reads YFLIYVLTLTASAATVAIVST. Residues 214–255 are Lumenal-facing; it reads TFLVHLVVMSDLYQETYIDDLGHLHVMDTVFLIQYLFLTFPR. Residues 256-276 traverse the membrane as a helical segment; the sequence is IVFMLGFVVVLSFLLGGYLLF. The Cytoplasmic portion of the chain corresponds to 277 to 344; sequence VLYLAATNQT…FPCHERKKQE (68 aa). The short motif at 341 to 344 is the Di-lysine motif element; sequence KKQE.

This sequence belongs to the DHHC palmitoyltransferase family. In terms of assembly, interacts with CPT1A.

The protein resides in the endoplasmic reticulum membrane. It is found in the golgi apparatus membrane. Its subcellular location is the cell membrane. The enzyme catalyses L-cysteinyl-[protein] + hexadecanoyl-CoA = S-hexadecanoyl-L-cysteinyl-[protein] + CoA. Palmitoyltransferase that catalyzes the addition of palmitate onto protein substrates including the D(2) dopamine receptor DRD2, GSK3B or MAVS. Mediates GSK3B palmitoylation to prevent its AKT1-mediated phosphorylation leading to activation of the STAT3 signaling pathway. Also catalyzes MAVS palmitoylation which promotes its stabilization and activation by inhibiting 'Lys-48'- but facilitating 'Lys-63'-linked ubiquitination. In Homo sapiens (Human), this protein is Palmitoyltransferase ZDHHC4.